Consider the following 159-residue polypeptide: Succinate dehydrogenase [ubiquinone] cytochrome b small subunit, mitochondrial (159 aa).

A mitochondrion-targeting transit peptide spans 1–30 (MLQTRLGLGALRQGRLLFAVKSFSTTSVAK). Residues 31 to 65 (IFPPPPQTIKGTVNDAAVFPHHSKLHGSYHWDFER) are Mitochondrial matrix-facing. The helical transmembrane segment at 66-82 (IIAIAMVPQVMIPLFTG) threads the bilayer. Residues 83-89 (TSHPLMD) are Mitochondrial intermembrane-facing. The chain crosses the membrane as a helical span at residues 90 to 109 (AALACTLITHAHLGFESCVI). H99 is a heme binding site. Residues 110 to 122 (DYFPARRFKKLSP) lie on the Mitochondrial matrix side of the membrane. Y111 serves as a coordination point for a ubiquinone. Residues 123–140 (LMHWILRGCTVLTLIGVY) traverse the membrane as a helical segment. Topologically, residues 141–159 (EFNTNDIGLTEGIKKLWKS) are mitochondrial intermembrane.

The protein belongs to the CybS family. As to quaternary structure, forms part of complex II containing four subunits: a flavoprotein (FP), an iron-sulfur protein (IP) and a cytochrome b composed of a large and a small subunit.

Its subcellular location is the mitochondrion inner membrane. It functions in the pathway carbohydrate metabolism; tricarboxylic acid cycle. In terms of biological role, membrane-anchoring subunit of succinate dehydrogenase (SDH) that is involved in complex II of the mitochondrial electron transport chain and is responsible for transferring electrons from succinate to ubiquinone (coenzyme Q). This is Succinate dehydrogenase [ubiquinone] cytochrome b small subunit, mitochondrial (sdh4) from Schizosaccharomyces pombe (strain 972 / ATCC 24843) (Fission yeast).